We begin with the raw amino-acid sequence, 49 residues long: Large ribosomal subunit protein bL33B (49 aa).

The protein belongs to the bacterial ribosomal protein bL33 family.

This chain is Large ribosomal subunit protein bL33B, found in Staphylococcus saprophyticus subsp. saprophyticus (strain ATCC 15305 / DSM 20229 / NCIMB 8711 / NCTC 7292 / S-41).